The following is a 272-amino-acid chain: L-aminoadipate-semialdehyde dehydrogenase-phosphopantetheinyl transferase (272 aa).

Belongs to the P-Pant transferase superfamily. AcpS family.

It carries out the reaction apo-[ACP] + CoA = holo-[ACP] + adenosine 3',5'-bisphosphate + H(+). In terms of biological role, catalyzes the transfer of a 4'-phosphopantetheine moiety from coenzyme A to a serine residue of acceptor proteins, such as alpha-aminoadipate reductase. Necessary for alpha-aminoadipate reductase activity. The protein is L-aminoadipate-semialdehyde dehydrogenase-phosphopantetheinyl transferase of Saccharomyces cerevisiae (strain ATCC 204508 / S288c) (Baker's yeast).